Consider the following 443-residue polypeptide: KH domain-containing, RNA-binding, signal transduction-associated protein 1 (443 aa).

The segment at 1–95 is disordered; that stretch reads MQRRDDPAAR…LLPPSATAAA (95 aa). Phosphoserine is present on residues Ser18 and Ser20. The residue at position 21 (Lys21) is an N6-acetyllysine. A Phosphoserine modification is found at Ser29. At Thr33 the chain carries Phosphothreonine. Arg45 and Arg52 each carry asymmetric dimethylarginine; by PRMT1. Ser58 carries the post-translational modification Phosphoserine. Residues 61–72 show a composition bias toward pro residues; the sequence is TQPPPLLPPSNP. Positions 81–95 are enriched in low complexity; that stretch reads SAPTPLLPPSATAAA. Thr84 bears the Phosphothreonine; by MAPK1 mark. Residues Lys96 and Lys102 each participate in a glycyl lysine isopeptide (Lys-Gly) (interchain with G-Cter in SUMO2) cross-link. The interval 100 to 260 is involved in homodimerization; sequence ENKYLPELMA…VKKFLVPDMM (161 aa). Ser113 is modified (phosphoserine). Residue Lys139 forms a Glycyl lysine isopeptide (Lys-Gly) (interchain with G-Cter in SUMO2) linkage. Ser150 is modified (phosphoserine). Positions 171-197 constitute a KH domain; sequence NFVGKILGPQGNTIKRLQEETGAKISV. Lys175 is subject to N6-acetyllysine; alternate. A Glycyl lysine isopeptide (Lys-Gly) (interchain with G-Cter in SUMO2); alternate cross-link involves residue Lys175. Phosphothreonine is present on Thr183. Positions 280 to 317 are disordered; that stretch reads PSRGRGVSVRGRGAAPPPPPVPRGRGVGPPRGALVRGT. Arg282, Arg284, and Arg291 each carry omega-N-methylarginine. The segment covering 283 to 293 has biased composition (low complexity); that stretch reads GRGVSVRGRGA. Arg304 is modified (asymmetric dimethylarginine; by PRMT1). Positions 307–316 are enriched in low complexity; sequence GPPRGALVRG. Arg310 and Arg315 each carry omega-N-methylarginine; by PRMT1. Dimethylated arginine; alternate is present on Arg320. Arg320 is modified (omega-N-methylarginine; by PRMT1; alternate). Arg325 bears the Omega-N-methylarginine; by PRMT1 mark. The disordered stretch occupies residues 326-345; the sequence is GATVTRGVPPPPTVRGAPTP. Dimethylated arginine; alternate occurs at positions 331 and 340. Omega-N-methylarginine; by PRMT1; alternate occurs at positions 331 and 340. Position 331 is an asymmetric dimethylarginine; alternate (Arg331). The interval 351–443 is interaction with HNRNPA1; sequence GIQRIPLPPT…AYREHPYGRY (93 aa). Phosphotyrosine is present on Tyr387. Ser390 carries the phosphoserine modification. Residues 400-420 form an interaction with ZBTB7A region; that stretch reads GHGELQDSYEAYGQDDWNGTR. A disordered region spans residues 411-443; it reads YGQDDWNGTRPSLKAPPARPVKGAYREHPYGRY. Lys432 is covalently cross-linked (Glycyl lysine isopeptide (Lys-Gly) (interchain with G-Cter in SUMO2)). A compositionally biased stretch (basic and acidic residues) spans 434 to 443; the sequence is AYREHPYGRY. Tyr435, Tyr440, and Tyr443 each carry phosphotyrosine; by PTK6.

This sequence belongs to the KHDRBS family. Self-associates to form homooligomers when bound to RNA, oligomerization appears to be limited when binding to proteins. Interacts with KHDRBS3/SLIM-2. Forms a trimeric complex in the nucleus consisting of BANP, HDAC6 and KHDRBS1/SAM68; HDAC6 keeps KHDRBS1 in a deacetylated state which inhibits the inclusion of CD44 alternate exons. The complex is disrupted by MAPK1/MAPK3-mediated phosphorylation of BANP which results in BANP export to the cytoplasm. This facilitates acetylation of KHDRBS1 and CD44 variant exon inclusion. Interacts with KHDRBS2/SLIM-1; heterooligomer formation of KHDRBS family proteins may modulate RNA substrate specificity. Interacts with PIK3R1, PLCG1. Interacts with RASA1, GRB2, SRC, CBP, PRMT1, APC, HNRNPA1. Interacts with PTK6 (via SH3 and SH2 domains). Forms a complex with ILF2, ILF3, YLPM1, RBMX, NCOA5 and PPP1CA. Binds WBP4/FBP21 (via WW domains), FNBP4/FBP30 (via WW domains). Interacts (via Arg/Gly-rich-flanked Pro-rich regions) with FYN (via the SH3 domain). Interacts with the non-receptor tyrosine kinase SRMS; the interaction leads to phosphorylation of KHDRBS1. Interacts with ZBTB7A; negatively regulates KHDRBS1 splicing activity toward BCL2L1. Tyrosine phosphorylated by several non-receptor tyrosine kinases including LCK, FYN and JAK3. Also tyrosine phosphorylated by the non-receptor tyrosine kinase SRMS in an EGF-dependent manner. Phosphorylation by PTK6 negatively regulates its RNA binding ability. Phosphorylation by PTK6 at Tyr-440 dictates the nuclear localization of KHDRBS1. Post-translationally, acetylated. Positively correlates with ability to bind RNA. Deacetylated by HDAC6; this regulates alternative splicing by inhibiting the inclusion of CD44 alternate exons. In terms of processing, arginine methylation is required for nuclear localization, Inhibits interaction with Src-like SH3 domains, but not interaction with WW domains of WBP4/FBP21 and FNBP4/FBP30.

It is found in the nucleus. The protein localises to the cytoplasm. Its subcellular location is the membrane. Recruited and tyrosine phosphorylated by several receptor systems, for example the T-cell, leptin and insulin receptors. Once phosphorylated, functions as an adapter protein in signal transduction cascades by binding to SH2 and SH3 domain-containing proteins. Role in G2-M progression in the cell cycle. Represses CBP-dependent transcriptional activation apparently by competing with other nuclear factors for binding to CBP. Also acts as a putative regulator of mRNA stability and/or translation rates and mediates mRNA nuclear export. Positively regulates the association of constitutive transport element (CTE)-containing mRNA with large polyribosomes and translation initiation. May not be involved in the nucleocytoplasmic export of unspliced (CTE)-containing RNA species. RNA-binding protein that plays a role in the regulation of alternative splicing and influences mRNA splice site selection and exon inclusion. Binds to RNA containing 5'-[AU]UAA-3' as a bipartite motif spaced by more than 15 nucleotides. Binds poly(A). Can regulate CD44 alternative splicing in a Ras pathway-dependent manner. In cooperation with HNRNPA1 modulates alternative splicing of BCL2L1 by promoting splicing toward isoform Bcl-X(S), and of SMN1. Can regulate alternative splicing of NRXN1 and NRXN3 in the laminin G-like domain 6 containing the evolutionary conserved neurexin alternative spliced segment 4 (AS4) involved in neurexin selective targeting to postsynaptic partners. In a neuronal activity-dependent manner cooperates synergistically with KHDRBS2/SLIM-1 in regulation of NRXN1 exon skipping at AS4. The cooperation with KHDRBS2/SLIM-1 is antagonistic for regulation of NXRN3 alternative splicing at AS4. The sequence is that of KH domain-containing, RNA-binding, signal transduction-associated protein 1 from Rattus norvegicus (Rat).